We begin with the raw amino-acid sequence, 120 residues long: Seripauperin-24 (120 aa).

Residues 1–20 (MVKLTSIAAGVAAIAATASA) form the signal peptide.

This sequence belongs to the SRP1/TIP1 family. Seripauperin subfamily. Post-translationally, O-glycosylated.

Its subcellular location is the secreted. It localises to the cell wall. In terms of biological role, component of the cell wall. The sequence is that of Seripauperin-24 (PAU24) from Saccharomyces cerevisiae (strain ATCC 204508 / S288c) (Baker's yeast).